We begin with the raw amino-acid sequence, 200 residues long: Probable GTP-binding protein EngB (200 aa).

The EngB-type G domain maps to 22-199 (NVAEVAFLGR…QDKITGYLFG (178 aa)). GTP contacts are provided by residues 30–37 (GRSNVGKS), 57–61 (GKTQL), 85–88 (DLPG), 155–158 (TKID), and 177–180 (FLSN). Positions 37 and 59 each coordinate Mg(2+).

It belongs to the TRAFAC class TrmE-Era-EngA-EngB-Septin-like GTPase superfamily. EngB GTPase family. Mg(2+) serves as cofactor.

Its function is as follows. Necessary for normal cell division and for the maintenance of normal septation. The sequence is that of Probable GTP-binding protein EngB from Aliarcobacter butzleri (strain RM4018) (Arcobacter butzleri).